The sequence spans 257 residues: MTPSEFRQSVRHGAFRGPTAGHCGPYAQANLAILPEAVAHDFLRFCQANPKACPLLGVGEPGAFRVDALGEDLDIRTDVPSYNVYRDGRLTERVESLEALWRDDFVVFAIGCSFSFEDMLAREGIGLRHVEEGRNVPMYRTSIPNRRAGIFGGQLVVSMRPMRGADAIRAVQITSRFPGVHGAPIHLGDPRELGIADLNAPEFGDAVTIRDGELPVFWACGVTPQTALMDAKLPIAIAHTPGHMLMTDITNASLAVF.

This sequence belongs to the D-glutamate cyclase family.

The protein is Putative hydro-lyase Bcep18194_B2576 of Burkholderia lata (strain ATCC 17760 / DSM 23089 / LMG 22485 / NCIMB 9086 / R18194 / 383).